We begin with the raw amino-acid sequence, 248 residues long: MTETARTTIDASEIEHFSRIAAQWWDPQGKFRPLHKFNPTRLAYIKEKVCAKFNRDPNAPRPLEGLRFLDIGCGGGLLCEPMARLGATVIGADASATNIEVAKIHAAQSSLDIDYRATTAEALADAGEKFDVVLNMEVVEHVSDVDLFMSATSAMVKPGGLMFVATINRTLKAYGLAIIGAEYVLRWLPRGTHQYEKLVRPEELEAAFSKADLRLIDKLGVTYNPLADSWNRSRDMDVNYMVLAERPA.

4 residues coordinate S-adenosyl-L-methionine: R41, G72, D93, and M136.

This sequence belongs to the methyltransferase superfamily. UbiG/COQ3 family.

The catalysed reaction is a 3-demethylubiquinol + S-adenosyl-L-methionine = a ubiquinol + S-adenosyl-L-homocysteine + H(+). The enzyme catalyses a 3-(all-trans-polyprenyl)benzene-1,2-diol + S-adenosyl-L-methionine = a 2-methoxy-6-(all-trans-polyprenyl)phenol + S-adenosyl-L-homocysteine + H(+). The protein operates within cofactor biosynthesis; ubiquinone biosynthesis. Functionally, O-methyltransferase that catalyzes the 2 O-methylation steps in the ubiquinone biosynthetic pathway. This Brucella abortus (strain 2308) protein is Ubiquinone biosynthesis O-methyltransferase.